Reading from the N-terminus, the 82-residue chain is Small ribosomal subunit protein bS16 (82 aa).

This sequence belongs to the bacterial ribosomal protein bS16 family.

The polypeptide is Small ribosomal subunit protein bS16 (Actinobacillus pleuropneumoniae serotype 5b (strain L20)).